The following is a 378-amino-acid chain: Protein RecA (378 aa).

Gly-79–Thr-86 provides a ligand contact to ATP.

This sequence belongs to the RecA family.

The protein localises to the cytoplasm. Functionally, can catalyze the hydrolysis of ATP in the presence of single-stranded DNA, the ATP-dependent uptake of single-stranded DNA by duplex DNA, and the ATP-dependent hybridization of homologous single-stranded DNAs. It interacts with LexA causing its activation and leading to its autocatalytic cleavage. The polypeptide is Protein RecA (Streptococcus pyogenes serotype M2 (strain MGAS10270)).